Here is a 499-residue protein sequence, read N- to C-terminus: Serine/threonine-protein phosphatase 5 (499 aa).

The segment at 1-23 (MAMAEGERTECAEPPRDEPPADG) is disordered. A2 is subject to N-acetylalanine. TPR repeat units lie at residues 28–61 (AEELKTQANDYFKAKDYENAIKFYSQAIELNPSN), 62–95 (AIYYGNRSLAYLRTECYGYALGDATRAIELDKKY), and 96–129 (IKGYYRRAASNMALGKFRAALRDYETVVKVKPHD). A catalytic region spans residues 184–499 (GKVTISFMKE…ANTLLQLGMM (316 aa)). The Mn(2+) site is built by D242, H244, and D271. H244 is a substrate binding site. Residues R275 and 303-304 (NH) contribute to the substrate site. N303 contributes to the Mn(2+) binding site. H304 acts as the Proton donor/acceptor in catalysis. H352 provides a ligand contact to Mn(2+). Substrate-binding residues include R400 and H427. Position 427 (H427) interacts with Mn(2+). Residues 495 to 499 (QLGMM) are required for autoinhibition.

It belongs to the PPP phosphatase family. PP-5 (PP-T) subfamily. Probably forms a complex composed of chaperones HSP90 and HSP70, co-chaperones STIP1/HOP, CDC37, PPP5C, PTGES3/p23, TSC1 and client protein TSC2. Probably forms a complex composed of chaperones HSP90 and HSP70, co-chaperones CDC37, PPP5C, TSC1 and client protein TSC2, CDK4, AKT, RAF1 and NR3C1; this complex does not contain co-chaperones STIP1/HOP and PTGES3/p23. Part of a complex with HSP90/HSP90AA1 and steroid receptors. Interacts (via TPR repeats) with HSP90AA1 (via TPR repeat-binding motif) or HSPA1A/HSPA1B; the interaction is direct and activates the phosphatase activity. Dissociates from HSPA1A/HSPA1B and HSP90AA1 in response to arachidonic acid. Interacts with CPNE1 (via VWFA domain). Interacts with CDC16, CDC27. Interacts with KLHDC10 (via the 6 Kelch repeats); inhibits the phosphatase activity on MAP3K5. Interacts with ATM and ATR; both interactions are induced by DNA damage and enhance ATM and ATR kinase activity. Interacts with RAD17; reduced by DNA damage. Interacts with nuclear receptors such as NR3C1/GCR and PPARG (activated by agonist); regulates their transactivation activities. Interacts (via TPR repeats) with S100 proteins S100A1, S100A2, S100A6, S100B and S100P; the interactions are calcium-dependent, strongly activate PPP5C phosphatase activity and compete with HSP90AA1 and MAP3K5 interactions. Interacts with SMAD2 and SMAD3 but not with SMAD1; decreases SMAD3 phosphorylation and protein levels. Interacts (via TPR repeats) with CRY1 and CRY2; the interaction with CRY2 down-regulates the phosphatase activity on CSNK1E. Interacts (via TPR repeats) with the active form of RAC1, GNA12 or GNA13; these interactions activate the phosphatase activity and translocate PPP5C to the cell membrane. Interacts with FLCN. It depends on Mg(2+) as a cofactor. Mn(2+) serves as cofactor. Post-translationally, activated by at least two different proteolytic cleavages producing a 56 kDa and a 50 kDa form. Ubiquitous.

The protein localises to the nucleus. The protein resides in the cytoplasm. It localises to the cell membrane. The enzyme catalyses O-phospho-L-seryl-[protein] + H2O = L-seryl-[protein] + phosphate. The catalysed reaction is O-phospho-L-threonyl-[protein] + H2O = L-threonyl-[protein] + phosphate. Its activity is regulated as follows. Autoinhibited. In the autoinhibited state, the TPR domain interacts with the catalytic region and prevents substrate access to the catalytic pocket. Allosterically activated by various polyunsaturated fatty acids, free long-chain fatty-acids and long-chain fatty acyl-CoA esters, arachidonic acid being the most effective activator. HSP90A and probably RAC1, GNA12 and GNA13 can also release the autoinhibition by the TPR repeat. Activation by RAC1, GNA12 and GNA13 is synergistic with the one produced by fatty acids binding. Inhibited by okadaic acid. In terms of biological role, serine/threonine-protein phosphatase that dephosphorylates a myriad of proteins involved in different signaling pathways including the kinases CSNK1E, ASK1/MAP3K5, PRKDC and RAF1, the nuclear receptors NR3C1, PPARG, ESR1 and ESR2, SMAD proteins and TAU/MAPT. Implicated in wide ranging cellular processes, including apoptosis, differentiation, DNA damage response, cell survival, regulation of ion channels or circadian rhythms, in response to steroid and thyroid hormones, calcium, fatty acids, TGF-beta as well as oxidative and genotoxic stresses. Participates in the control of DNA damage response mechanisms such as checkpoint activation and DNA damage repair through, for instance, the regulation ATM/ATR-signaling and dephosphorylation of PRKDC and TP53BP1. Inhibits ASK1/MAP3K5-mediated apoptosis induced by oxidative stress. Plays a positive role in adipogenesis, mainly through the dephosphorylation and activation of PPARG transactivation function. Also dephosphorylates and inhibits the anti-adipogenic effect of NR3C1. Regulates the circadian rhythms, through the dephosphorylation and activation of CSNK1E. May modulate TGF-beta signaling pathway by the regulation of SMAD3 phosphorylation and protein expression levels. Dephosphorylates and may play a role in the regulation of TAU/MAPT. Through their dephosphorylation, may play a role in the regulation of ions channels such as KCNH2. Dephosphorylate FNIP1, disrupting interaction with HSP90AA1/Hsp90. This chain is Serine/threonine-protein phosphatase 5 (PPP5C), found in Homo sapiens (Human).